The chain runs to 284 residues: NADH-cytochrome b5 reductase 1 (284 aa).

A helical transmembrane segment spans residues 8–28 (PLFVFSTIAIIISTFVIFYFV). An FAD-binding FR-type domain is found at 41-144 (DTFQKFPLIE…RGPKGFFTYT (104 aa)). FAD is bound by residues 124 to 139 (DSKK…GPKG) and 150 to 182 (SFGM…KISL).

This sequence belongs to the flavoprotein pyridine nucleotide cytochrome reductase family. In terms of assembly, monomer. Component of the 2-(3-amino-3-carboxypropyl)histidine synthase complex composed of DPH1, DPH2, DPH3 and a NADH-dependent reductase, predominantly CBR1. It depends on FAD as a cofactor.

It is found in the mitochondrion outer membrane. The enzyme catalyses 2 Fe(III)-[cytochrome b5] + NADH = 2 Fe(II)-[cytochrome b5] + NAD(+) + H(+). The catalysed reaction is 2 Fe(3+)-[Dph3] + NADH = 2 Fe(2+)-[Dph3] + NAD(+) + H(+). Its pathway is protein modification; peptidyl-diphthamide biosynthesis. In terms of biological role, NADH-dependent reductase for DPH3 and cytochrome b5. Required for the first step of diphthamide biosynthesis, a post-translational modification of histidine which occurs in elongation factor 2. DPH1 and DPH2 transfer a 3-amino-3-carboxypropyl (ACP) group from S-adenosyl-L-methionine (SAM) to a histidine residue, the reaction is assisted by a reduction system comprising DPH3 and a NADH-dependent reductase, predominantly CBR1. By reducing DPH3, also involved in the formation of the tRNA wobble base modification mcm5s 2U (5-methoxycarbonylmethyl-2-thiouridine), mediated by the elongator complex. The cytochrome b5/NADH cytochrome b5 reductase electron transfer system supports the catalytic activity of several sterol biosynthetic enzymes. This chain is NADH-cytochrome b5 reductase 1 (CBR1), found in Scheffersomyces stipitis (strain ATCC 58785 / CBS 6054 / NBRC 10063 / NRRL Y-11545) (Yeast).